Reading from the N-terminus, the 182-residue chain is Transcription termination/antitermination protein NusG (182 aa).

One can recognise a KOW domain in the interval 131–163 (VGEQVRIQSGPFANQIGEVQEIEADKFKLTVLV).

This sequence belongs to the NusG family.

In terms of biological role, participates in transcription elongation, termination and antitermination. The polypeptide is Transcription termination/antitermination protein NusG (Staphylococcus epidermidis (strain ATCC 35984 / DSM 28319 / BCRC 17069 / CCUG 31568 / BM 3577 / RP62A)).